The primary structure comprises 130 residues: Small ribosomal subunit protein uS11 (130 aa).

The interval 1-21 is disordered; it reads MAPQSKRSGGRKQKKHVPNGV. Basic residues predominate over residues 8 to 17; it reads SGGRKQKKHV.

The protein belongs to the universal ribosomal protein uS11 family. As to quaternary structure, part of the 30S ribosomal subunit. Interacts with proteins S7 and S18. Binds to IF-3.

Functionally, located on the platform of the 30S subunit, it bridges several disparate RNA helices of the 16S rRNA. Forms part of the Shine-Dalgarno cleft in the 70S ribosome. In Acaryochloris marina (strain MBIC 11017), this protein is Small ribosomal subunit protein uS11.